The following is a 459-amino-acid chain: Argininosuccinate lyase (459 aa).

It belongs to the lyase 1 family. Argininosuccinate lyase subfamily.

Its subcellular location is the cytoplasm. It catalyses the reaction 2-(N(omega)-L-arginino)succinate = fumarate + L-arginine. The protein operates within amino-acid biosynthesis; L-arginine biosynthesis; L-arginine from L-ornithine and carbamoyl phosphate: step 3/3. This Ruminiclostridium cellulolyticum (strain ATCC 35319 / DSM 5812 / JCM 6584 / H10) (Clostridium cellulolyticum) protein is Argininosuccinate lyase.